The chain runs to 424 residues: Serine--tRNA ligase (424 aa).

Thr-228–Glu-230 is an L-serine binding site. ATP is bound at residue Arg-259–Glu-261. Glu-282 lines the L-serine pocket. Glu-346 to Ser-349 is a binding site for ATP. Position 382 (Ser-382) interacts with L-serine.

Belongs to the class-II aminoacyl-tRNA synthetase family. Type-1 seryl-tRNA synthetase subfamily. In terms of assembly, homodimer. The tRNA molecule binds across the dimer.

It localises to the cytoplasm. It catalyses the reaction tRNA(Ser) + L-serine + ATP = L-seryl-tRNA(Ser) + AMP + diphosphate + H(+). The catalysed reaction is tRNA(Sec) + L-serine + ATP = L-seryl-tRNA(Sec) + AMP + diphosphate + H(+). Its pathway is aminoacyl-tRNA biosynthesis; selenocysteinyl-tRNA(Sec) biosynthesis; L-seryl-tRNA(Sec) from L-serine and tRNA(Sec): step 1/1. Its function is as follows. Catalyzes the attachment of serine to tRNA(Ser). Is also able to aminoacylate tRNA(Sec) with serine, to form the misacylated tRNA L-seryl-tRNA(Sec), which will be further converted into selenocysteinyl-tRNA(Sec). The polypeptide is Serine--tRNA ligase (Rhodospirillum centenum (strain ATCC 51521 / SW)).